The sequence spans 508 residues: Cell division protein FtsZ (508 aa).

GTP is bound by residues 24 to 28 (GAGGN), 111 to 113 (GTG), Glu142, Arg146, and Asp190. Disordered regions lie at residues 342-389 (IAET…SAPQ) and 428-508 (VAEE…RLAN). Residues 464 to 482 (QQASAPQAQARSAQSARPQ) show a composition bias toward low complexity.

It belongs to the FtsZ family. Homodimer. Polymerizes to form a dynamic ring structure in a strictly GTP-dependent manner. Interacts directly with several other division proteins.

It localises to the cytoplasm. In terms of biological role, essential cell division protein that forms a contractile ring structure (Z ring) at the future cell division site. The regulation of the ring assembly controls the timing and the location of cell division. One of the functions of the FtsZ ring is to recruit other cell division proteins to the septum to produce a new cell wall between the dividing cells. Binds GTP and shows GTPase activity. This chain is Cell division protein FtsZ, found in Caulobacter vibrioides (strain ATCC 19089 / CIP 103742 / CB 15) (Caulobacter crescentus).